A 254-amino-acid chain; its full sequence is Probable derlin-2 homolog (254 aa).

Residues 1 to 17 (MAQPFEDWYKNLPIVTK) are Cytoplasmic-facing. The chain crosses the membrane as a helical span at residues 18–38 (IYMTGCVVTSVSVYLGLVGPL). Over 39–95 (RLYLNFPLVFGKYEFWRLFTNFFFYDEIGMNFFFHMYFLVRHSRLLEESSFRGRSAD) the chain is Lumenal. The chain crosses the membrane as a helical span at residues 96-116 (YLFMWIFGSFLLLIMDAFLFY). Residues 117 to 118 (TK) are Cytoplasmic-facing. The helical transmembrane segment at 119–139 (IVTKVLFLAPSIAFMVIYVWS) threads the bilayer. At 140-146 (RRNPNMH) the chain is on the lumenal side. A helical membrane pass occupies residues 147 to 167 (ISFLGLFTFSAPYLPWVILIM). The Cytoplasmic portion of the chain corresponds to 168 to 254 (GYLFNHDLTT…FLNEDDLDQQ (87 aa)).

Belongs to the derlin family.

Its subcellular location is the endoplasmic reticulum membrane. In terms of biological role, may be involved in the degradation process of specific misfolded endoplasmic reticulum (ER) luminal proteins. May also be involved in endoplasmic reticulum stress-induced pre-emptive quality control, a mechanism that selectively attenuates the translocation of newly synthesized proteins into the endoplasmic reticulum and reroutes them to the cytosol for proteasomal degradation. This is Probable derlin-2 homolog (derl2) from Dictyostelium discoideum (Social amoeba).